Consider the following 393-residue polypeptide: MTRPVTGKDLMIVNMGPHHPSMHGVLRLIVTLDGEDVVDCEPILGYLHRGMEKIAENRAIIQYLPYVTRWDYLATMFTEAITVNGPEQLGNIQVPKRASYIRVIMLELSRIASHLLWLGPFMADIGAQTPFFYIFREREFVYDLFEAATGMRMMHNFFRIGGIAADLPYGWIDKCLDFCDYFLTEVVEYQKLITRNPIFLERVEGVGIIGGEEAINWGLSGPMLRASGIPWDLRKVDRYESYDEFEWEIQWQKQGDSLARYLVRLSEMTESIKIIQQALEGLPGGPYENLESRGFDRKRNPEWNDFEYRFISKKPSPTFELSKQELYVRVEAPKGELGIFLIGDQSGFPWRWKIRPPGFINLQILPELVKRMKLADIMTILGSIDIIMGEVDR.

It belongs to the complex I 49 kDa subunit family. As to quaternary structure, NDH is composed of at least 16 different subunits, 5 of which are encoded in the nucleus.

Its subcellular location is the plastid. It localises to the chloroplast thylakoid membrane. It catalyses the reaction a plastoquinone + NADH + (n+1) H(+)(in) = a plastoquinol + NAD(+) + n H(+)(out). It carries out the reaction a plastoquinone + NADPH + (n+1) H(+)(in) = a plastoquinol + NADP(+) + n H(+)(out). NDH shuttles electrons from NAD(P)H:plastoquinone, via FMN and iron-sulfur (Fe-S) centers, to quinones in the photosynthetic chain and possibly in a chloroplast respiratory chain. The immediate electron acceptor for the enzyme in this species is believed to be plastoquinone. Couples the redox reaction to proton translocation, and thus conserves the redox energy in a proton gradient. In Lobularia maritima (Sweet alyssum), this protein is NAD(P)H-quinone oxidoreductase subunit H, chloroplastic.